Reading from the N-terminus, the 211-residue chain is Calcipressin-like protein (211 aa).

Residues Ser113 and Ser117 each carry the phosphoserine modification. The residue at position 182 (Thr182) is a Phosphothreonine.

Belongs to the RCAN family.

Functionally, inhibits calcineurin-dependent transcriptional responses by binding to the catalytic domain of calcineurin. This Saccharomyces cerevisiae (strain ATCC 204508 / S288c) (Baker's yeast) protein is Calcipressin-like protein (RCN1).